Reading from the N-terminus, the 777-residue chain is Endonuclease MutS2 (777 aa).

328 to 335 contributes to the ATP binding site; it reads GPNTGGKT. The 76-residue stretch at 702–777 folds into the Smr domain; that stretch reads LDLRGKRYEE…GSGATIVIFK (76 aa).

Belongs to the DNA mismatch repair MutS family. MutS2 subfamily. In terms of assembly, homodimer. Binds to stalled ribosomes, contacting rRNA.

Functionally, endonuclease that is involved in the suppression of homologous recombination and thus may have a key role in the control of bacterial genetic diversity. In terms of biological role, acts as a ribosome collision sensor, splitting the ribosome into its 2 subunits. Detects stalled/collided 70S ribosomes which it binds and splits by an ATP-hydrolysis driven conformational change. Acts upstream of the ribosome quality control system (RQC), a ribosome-associated complex that mediates the extraction of incompletely synthesized nascent chains from stalled ribosomes and their subsequent degradation. Probably generates substrates for RQC. The protein is Endonuclease MutS2 of Streptococcus sanguinis (strain SK36).